Consider the following 297-residue polypeptide: ATP synthase gamma chain (297 aa).

The protein belongs to the ATPase gamma chain family. F-type ATPases have 2 components, CF(1) - the catalytic core - and CF(0) - the membrane proton channel. CF(1) has five subunits: alpha(3), beta(3), gamma(1), delta(1), epsilon(1). CF(0) has three main subunits: a, b and c.

The protein localises to the cell membrane. Produces ATP from ADP in the presence of a proton gradient across the membrane. The gamma chain is believed to be important in regulating ATPase activity and the flow of protons through the CF(0) complex. The polypeptide is ATP synthase gamma chain (Beutenbergia cavernae (strain ATCC BAA-8 / DSM 12333 / CCUG 43141 / JCM 11478 / NBRC 16432 / NCIMB 13614 / HKI 0122)).